The primary structure comprises 838 residues: DNA gyrase subunit A (838 aa).

Positions Leu-41 to Leu-510 constitute a Topo IIA-type catalytic domain. The active-site O-(5'-phospho-DNA)-tyrosine intermediate is the Tyr-129. The GyrA-box signature appears at Gln-537–Gly-543.

Belongs to the type II topoisomerase GyrA/ParC subunit family. As to quaternary structure, heterotetramer, composed of two GyrA and two GyrB chains. In the heterotetramer, GyrA contains the active site tyrosine that forms a transient covalent intermediate with DNA, while GyrB binds cofactors and catalyzes ATP hydrolysis.

Its subcellular location is the cytoplasm. The catalysed reaction is ATP-dependent breakage, passage and rejoining of double-stranded DNA.. A type II topoisomerase that negatively supercoils closed circular double-stranded (ds) DNA in an ATP-dependent manner to modulate DNA topology and maintain chromosomes in an underwound state. Negative supercoiling favors strand separation, and DNA replication, transcription, recombination and repair, all of which involve strand separation. Also able to catalyze the interconversion of other topological isomers of dsDNA rings, including catenanes and knotted rings. Type II topoisomerases break and join 2 DNA strands simultaneously in an ATP-dependent manner. This is DNA gyrase subunit A from Mycobacterium tuberculosis (strain CDC 1551 / Oshkosh).